The following is a 252-amino-acid chain: Imidazole glycerol phosphate synthase subunit HisF (252 aa).

Catalysis depends on residues aspartate 11 and aspartate 130.

The protein belongs to the HisA/HisF family. Heterodimer of HisH and HisF.

The protein resides in the cytoplasm. It catalyses the reaction 5-[(5-phospho-1-deoxy-D-ribulos-1-ylimino)methylamino]-1-(5-phospho-beta-D-ribosyl)imidazole-4-carboxamide + L-glutamine = D-erythro-1-(imidazol-4-yl)glycerol 3-phosphate + 5-amino-1-(5-phospho-beta-D-ribosyl)imidazole-4-carboxamide + L-glutamate + H(+). It participates in amino-acid biosynthesis; L-histidine biosynthesis; L-histidine from 5-phospho-alpha-D-ribose 1-diphosphate: step 5/9. Functionally, IGPS catalyzes the conversion of PRFAR and glutamine to IGP, AICAR and glutamate. The HisF subunit catalyzes the cyclization activity that produces IGP and AICAR from PRFAR using the ammonia provided by the HisH subunit. The polypeptide is Imidazole glycerol phosphate synthase subunit HisF (Bacillus cereus (strain AH187)).